The sequence spans 425 residues: Serine--tRNA ligase (425 aa).

233–235 (TAE) contributes to the L-serine binding site. 264 to 266 (RRE) is an ATP binding site. E287 contacts L-serine. 351 to 354 (EISS) provides a ligand contact to ATP. S385 is a binding site for L-serine.

This sequence belongs to the class-II aminoacyl-tRNA synthetase family. Type-1 seryl-tRNA synthetase subfamily. In terms of assembly, homodimer. The tRNA molecule binds across the dimer.

Its subcellular location is the cytoplasm. The enzyme catalyses tRNA(Ser) + L-serine + ATP = L-seryl-tRNA(Ser) + AMP + diphosphate + H(+). The catalysed reaction is tRNA(Sec) + L-serine + ATP = L-seryl-tRNA(Sec) + AMP + diphosphate + H(+). It functions in the pathway aminoacyl-tRNA biosynthesis; selenocysteinyl-tRNA(Sec) biosynthesis; L-seryl-tRNA(Sec) from L-serine and tRNA(Sec): step 1/1. Functionally, catalyzes the attachment of serine to tRNA(Ser). Is also able to aminoacylate tRNA(Sec) with serine, to form the misacylated tRNA L-seryl-tRNA(Sec), which will be further converted into selenocysteinyl-tRNA(Sec). The polypeptide is Serine--tRNA ligase (Synechococcus sp. (strain WH7803)).